The sequence spans 462 residues: Transcript termination protein A18 (462 aa).

One can recognise a Helicase ATP-binding domain in the interval 99-255 (KCKEKRPLYT…NSIINFIKFS (157 aa)). 112-119 (LACGFGKT) provides a ligand contact to ATP. Residues 205 to 208 (DEAH) carry the DEAH box motif. One can recognise a Helicase C-terminal domain in the interval 308–459 (IVDKIIETFK…ATKLGFREVS (152 aa)).

Belongs to the helicase family. Poxviruses subfamily. In terms of assembly, interacts with G2. Might be part of a transcription complex composed at least of G2, A18, and H5.

Its subcellular location is the virion. In terms of biological role, DNA helicase which seems to act as a postreplicative transcription termination factor. Involved in ATP-dependent release of nascent RNA. Forms a stable complex with single-stranded DNA, and to a lesser extent RNA. The polypeptide is Transcript termination protein A18 (Vertebrata (FPV)).